Here is a 271-residue protein sequence, read N- to C-terminus: Formamidopyrimidine-DNA glycosylase (271 aa).

P2 (schiff-base intermediate with DNA) is an active-site residue. E3 (proton donor) is an active-site residue. The active-site Proton donor; for beta-elimination activity is the K58. DNA contacts are provided by H91, R110, and R152. The FPG-type zinc finger occupies 237-271 (SIYGKKGRPCPKCGSAIRMMRLGGRSTFFCPLCQK). Residue R261 is the Proton donor; for delta-elimination activity of the active site.

It belongs to the FPG family. Monomer. Zn(2+) serves as cofactor.

The enzyme catalyses Hydrolysis of DNA containing ring-opened 7-methylguanine residues, releasing 2,6-diamino-4-hydroxy-5-(N-methyl)formamidopyrimidine.. It catalyses the reaction 2'-deoxyribonucleotide-(2'-deoxyribose 5'-phosphate)-2'-deoxyribonucleotide-DNA = a 3'-end 2'-deoxyribonucleotide-(2,3-dehydro-2,3-deoxyribose 5'-phosphate)-DNA + a 5'-end 5'-phospho-2'-deoxyribonucleoside-DNA + H(+). Its function is as follows. Involved in base excision repair of DNA damaged by oxidation or by mutagenic agents. Acts as a DNA glycosylase that recognizes and removes damaged bases. Has a preference for oxidized purines, such as 7,8-dihydro-8-oxoguanine (8-oxoG). Has AP (apurinic/apyrimidinic) lyase activity and introduces nicks in the DNA strand. Cleaves the DNA backbone by beta-delta elimination to generate a single-strand break at the site of the removed base with both 3'- and 5'-phosphates. This chain is Formamidopyrimidine-DNA glycosylase, found in Geotalea daltonii (strain DSM 22248 / JCM 15807 / FRC-32) (Geobacter daltonii).